The following is a 294-amino-acid chain: MTSQESIGIKFLFGGLSCMGAAVVSNPVDVLKTRFQIHGEGIDSKSLGLVNGTIKIIKNEGISAMYKGLTPSLLREATYSTLRMGGYDVIKNYFIDSNGKTNLLSKVTSGALSGALGACITSPTDLIKVRMQASSKGVKYDSISSAFKEIIAKEGIKGLWKGVGPTTQRAALLTASQIPSYDHIKHMILDHGIIQVDGLQVHIVSSIFAGLIASITTSPVDLVKTRIMNQPFDSNGVGLIYKSSYDCFKKTFQSEGISGLYKGFLPNWFRIGPHTIVTFILYEYLRKVSGIKPI.

Over 1–10 (MTSQESIGIK) the chain is Mitochondrial intermembrane. 3 Solcar repeats span residues 9-93 (IKFL…IKNY), 101-187 (TNLL…IKHM), and 197-288 (DGLQ…LRKV). The chain crosses the membrane as a helical span at residues 11-31 (FLFGGLSCMGAAVVSNPVDVL). Residues 32–67 (KTRFQIHGEGIDSKSLGLVNGTIKIIKNEGISAMYK) lie on the Mitochondrial matrix side of the membrane. Residues 68–88 (GLTPSLLREATYSTLRMGGYD) traverse the membrane as a helical segment. At 89-106 (VIKNYFIDSNGKTNLLSK) the chain is on the mitochondrial intermembrane side. Residues 107–127 (VTSGALSGALGACITSPTDLI) form a helical membrane-spanning segment. The Mitochondrial matrix portion of the chain corresponds to 128–161 (KVRMQASSKGVKYDSISSAFKEIIAKEGIKGLWK). Residues 162-182 (GVGPTTQRAALLTASQIPSYD) form a helical membrane-spanning segment. Over 183–192 (HIKHMILDHG) the chain is Mitochondrial intermembrane. Residues 193-213 (IIQVDGLQVHIVSSIFAGLIA) form a helical membrane-spanning segment. Residues 214-267 (SITTSPVDLVKTRIMNQPFDSNGVGLIYKSSYDCFKKTFQSEGISGLYKGFLPN) are Mitochondrial matrix-facing. A helical membrane pass occupies residues 268 to 285 (WFRIGPHTIVTFILYEYL). Over 286–294 (RKVSGIKPI) the chain is Mitochondrial intermembrane.

The protein belongs to the mitochondrial carrier (TC 2.A.29) family.

The protein resides in the mitochondrion inner membrane. Its function is as follows. Mitochondrial solute carriers shuttle metabolites, nucleotides, and cofactors through the mitochondrial inner membrane. The protein is Mitochondrial substrate carrier family protein ucpB (ucpB) of Dictyostelium discoideum (Social amoeba).